The chain runs to 297 residues: Aspartate carbamoyltransferase catalytic subunit (297 aa).

Carbamoyl phosphate-binding residues include Arg-51 and Thr-52. L-aspartate is bound at residue Lys-79. Arg-101, His-129, and Gln-132 together coordinate carbamoyl phosphate. Residues Arg-162 and Arg-216 each contribute to the L-aspartate site. Carbamoyl phosphate is bound by residues Gly-257 and Pro-258.

The protein belongs to the aspartate/ornithine carbamoyltransferase superfamily. ATCase family. Heterododecamer (2C3:3R2) of six catalytic PyrB chains organized as two trimers (C3), and six regulatory PyrI chains organized as three dimers (R2).

It carries out the reaction carbamoyl phosphate + L-aspartate = N-carbamoyl-L-aspartate + phosphate + H(+). The protein operates within pyrimidine metabolism; UMP biosynthesis via de novo pathway; (S)-dihydroorotate from bicarbonate: step 2/3. In terms of biological role, catalyzes the condensation of carbamoyl phosphate and aspartate to form carbamoyl aspartate and inorganic phosphate, the committed step in the de novo pyrimidine nucleotide biosynthesis pathway. This Myxococcus xanthus (strain DK1622) protein is Aspartate carbamoyltransferase catalytic subunit.